We begin with the raw amino-acid sequence, 92 residues long: Small ribosomal subunit protein uS19c (92 aa).

It belongs to the universal ribosomal protein uS19 family.

It is found in the plastid. The protein localises to the chloroplast. In terms of biological role, protein S19 forms a complex with S13 that binds strongly to the 16S ribosomal RNA. The protein is Small ribosomal subunit protein uS19c (rps19) of Chlorella vulgaris (Green alga).